The following is a 3259-amino-acid chain: Striated muscle-specific serine/threonine-protein kinase (3259 aa).

The tract at residues 1–30 is disordered; that stretch reads MQKARGTRGEDAGTRAPPSPGVPPKRAKVG. Residue Arg33 is modified to Omega-N-methylarginine. The 82-residue stretch at 45-126 folds into the Ig-like 1 domain; that stretch reads PVFLRPLKNA…GKASCEAVLT (82 aa). Ser141 carries the phosphoserine modification. 4 disordered regions span residues 155–185, 198–226, 278–716, and 816–880; these read RAFSTPTGGSDTLVGTSLDTPPTSVTGTSEE, EQEAGSGGGTRPLPGSPRQAQTTGAGPRH, PSGL…DDSY, and VRPG…KVSL. Over residues 158–185 the composition is skewed to polar residues; it reads STPTGGSDTLVGTSLDTPPTSVTGTSEE. Pro residues predominate over residues 301–317; sequence PALPPPSKSALLPPPSP. 2 positions are modified to phosphoserine: Ser368 and Ser375. Thr379 is subject to Phosphothreonine. Ser382 and Ser385 each carry phosphoserine. The segment covering 404 to 422 has biased composition (basic and acidic residues); the sequence is ILDKLQFFEERRRSLERSD. A Phosphoserine modification is found at Ser423. Thr453 bears the Phosphothreonine mark. Phosphoserine is present on residues Ser457, Ser463, Ser493, Ser511, Ser531, and Ser554. The span at 459–473 shows a compositional bias: basic and acidic residues; that stretch reads EELRSPRGSVAERRR. Residues 510–522 are compositionally biased toward basic and acidic residues; that stretch reads TSREELVRSHESL. Composition is skewed to basic and acidic residues over residues 624 to 638 and 663 to 680; these read PESRTKAPSARKREP and EKNRAGPEAEKRLRRGPE. The region spanning 727–817 is the Ig-like 2 domain; the sequence is PVFEIPLQNM…ASCASSLAVR (91 aa). The segment covering 820–830 has biased composition (polar residues); the sequence is ASTSPFSSPIT. Ig-like domains lie at 874 to 963, 968 to 1056, and 1069 to 1157; these read PTFK…ARLE, PESR…DELT, and PLFT…AQLY. The cysteines at positions 994 and 1046 are disulfide-linked. 2 positions are modified to phosphoserine: Ser1133 and Ser1177. The interval 1162–1185 is disordered; the sequence is RTAASGPSSKLEKMPSIPEEPEHG. An Ig-like 6 domain is found at 1193–1283; it reads PDFLRPLQDL…AACYAHLYVT (91 aa). Positions 1290 to 1387 constitute a Fibronectin type-III 1 domain; it reads PDGAPQVVAV…PSEPVQLLEH (98 aa). A compositionally biased stretch (low complexity) spans 1367 to 1379; that stretch reads SSGKSSSKPSAPS. Residues 1367 to 1386 form a disordered region; the sequence is SSGKSSSKPSAPSEPVQLLE. The region spanning 1490–1578 is the Ig-like 7 domain; the sequence is PRFESIMEDV…GEVSCKAELS (89 aa). The region spanning 1606–1859 is the Protein kinase 1 domain; the sequence is YDIHQEIGRG…AEETLEHPWF (254 aa). ATP is bound by residues 1612 to 1620 and Lys1635; that span reads IGRGAFSYL. Asp1724 (proton acceptor) is an active-site residue. Disordered regions lie at residues 1913 to 2244, 2336 to 2451, and 2463 to 2562; these read MPRR…QMPA, AKFK…SPVL, and RLSS…SQPN. The segment covering 1918–1927 has biased composition (low complexity); it reads PPSGGLSSSS. Ser1993, Ser2004, Ser2019, Ser2020, and Ser2042 each carry phosphoserine. Residues 2009-2019 show a composition bias toward basic and acidic residues; that stretch reads SPRRPELRRGS. Arg2060 is subject to Asymmetric dimethylarginine; alternate. Omega-N-methylarginine; alternate is present on Arg2060. Residues 2069 to 2081 show a composition bias toward low complexity; sequence AQRLQALRQRLLR. Phosphoserine occurs at positions 2114 and 2135. Arg2144 carries the post-translational modification Omega-N-methylarginine. A compositionally biased stretch (polar residues) spans 2168-2179; sequence ESPSLSALSETQ. The segment covering 2180–2189 has biased composition (pro residues); sequence PPSPALPSAP. Phosphoserine occurs at positions 2182 and 2207. Residues 2193–2207 are compositionally biased toward polar residues; the sequence is ITKSPEPSAATSRDS. The span at 2208 to 2218 shows a compositional bias: pro residues; it reads PQPPAPQPVPE. The span at 2219-2229 shows a compositional bias: basic and acidic residues; the sequence is KIPEPKPEPVR. Positions 2230-2244 are enriched in low complexity; the sequence is AAKPAQPPLALQMPA. Over residues 2336–2345 the composition is skewed to basic and acidic residues; that stretch reads AKFKRSRESP. Positions 2346–2355 are enriched in low complexity; it reads LSRGLRLLSR. The span at 2356–2372 shows a compositional bias: basic and acidic residues; that stretch reads SRSEERGPFRGAEDDGI. Ser2376 carries the phosphoserine modification. Thr2380 is subject to Phosphothreonine. The span at 2384–2395 shows a compositional bias: basic and acidic residues; the sequence is LVRRPERSRSVQ. A phosphoserine mark is found at Ser2410, Ser2414, Ser2438, Ser2439, Ser2444, and Ser2448. Low complexity predominate over residues 2463–2484; it reads RLSSRLQRSGSSEDSGGASGRS. The segment covering 2510 to 2520 has biased composition (polar residues); sequence QLASQTGATTP. A phosphoserine mark is found at Ser2521 and Ser2524. The segment covering 2521-2540 has biased composition (low complexity); sequence SAESLGSEASGTSGSSAPGE. Over residues 2543-2554 the composition is skewed to basic residues; the sequence is SRHRWGLSRLRK. Position 2559 is a phosphoserine (Ser2559). The Ig-like 8 domain occupies 2583-2673; it reads PPVFHIKLKD…GSITSSCTVA (91 aa). Cysteines 2605 and 2657 form a disulfide. A Fibronectin type-III 2 domain is found at 2680 to 2774; it reads KLAPPEVPQT…KVFIRGTQDS (95 aa). The residue at position 2771 (Thr2771) is a Phosphothreonine. 2 disordered regions span residues 2771–2829 and 2855–2957; these read TQDS…MSAN and TQQA…PQKP. Ser2774 is subject to Phosphoserine. A compositionally biased stretch (pro residues) spans 2793 to 2810; sequence RAPPPDSPTSLVPTPPLA. Positions 2814–2828 are enriched in low complexity; that stretch reads SQASTLSPSTSSMSA. The Fibronectin type-III 3 domain maps to 2859-2965; the sequence is EPSPPSILVT…KPYTFLEEKA (107 aa). Positions 2880 to 2907 are enriched in polar residues; that stretch reads GTLTPTSSPQGVKPAPSSSSLYMVTSFV. A compositionally biased stretch (pro residues) spans 2910 to 2924; sequence PPDPQPPAPEPPPEP. Residues 2940 to 2950 show a composition bias toward polar residues; it reads SSPTPESTTLR. At Ser2941 the chain carries Phosphoserine. A Protein kinase 2 domain is found at 2958–3210; sequence YTFLEEKARG…LQDCLAHPWL (253 aa). Residues 2964-2972 and Lys2987 each bind ATP; that span reads KARGRFGVV. Asp3077 serves as the catalytic Proton acceptor.

Belongs to the protein kinase superfamily. CAMK Ser/Thr protein kinase family. Interacts with MTM1. In terms of processing, may be autophosphorylated. In terms of tissue distribution, isoform 2 is highly expressed in differentiated arterial smooth muscle cells (ASMC) in the medial layer of the aorta. Weakly detected in brain and testis and to a lesser extent in organs rich in striated muscle or visceral smooth muscle.

The protein localises to the nucleus. It catalyses the reaction L-seryl-[protein] + ATP = O-phospho-L-seryl-[protein] + ADP + H(+). The catalysed reaction is L-threonyl-[protein] + ATP = O-phospho-L-threonyl-[protein] + ADP + H(+). In terms of biological role, isoform 2 may have a role in regulating the growth and differentiation of arterial smooth muscle cells. The chain is Striated muscle-specific serine/threonine-protein kinase (Speg) from Rattus norvegicus (Rat).